A 125-amino-acid polypeptide reads, in one-letter code: Inner membrane protein YbaN (125 aa).

Residues 1–6 (MQRIIL) lie on the Cytoplasmic side of the membrane. Residues 7 to 26 (IIIGWLAVVLGTLGVVLPVL) traverse the membrane as a helical segment. At 27–45 (PTTPFILLAAWCFARSSPR) the chain is on the periplasmic side. The chain crosses the membrane as a helical span at residues 46-63 (FHAWLLYRSWFGSYLRFW). The Cytoplasmic segment spans residues 64 to 74 (QKHHAMPRGVK). A helical membrane pass occupies residues 75–92 (PRAILLILLTFAISLWFV). At 93–95 (QMP) the chain is on the periplasmic side. The helical transmembrane segment at 96 to 118 (WVRIMLLVILACLLFYMWRIPVI) threads the bilayer. Residues 119-125 (DEKQEKH) lie on the Cytoplasmic side of the membrane.

Its subcellular location is the cell inner membrane. The chain is Inner membrane protein YbaN (ybaN) from Escherichia coli O157:H7.